A 1396-amino-acid polypeptide reads, in one-letter code: DNA-directed RNA polymerase subunit beta' (1396 aa).

Zn(2+)-binding residues include Cys72, Cys74, Cys87, and Cys90. Residues Asp463, Asp465, and Asp467 each coordinate Mg(2+). The Zn(2+) site is built by Cys814, Cys889, Cys896, and Cys899.

The protein belongs to the RNA polymerase beta' chain family. In terms of assembly, the RNAP catalytic core consists of 2 alpha, 1 beta, 1 beta' and 1 omega subunit. When a sigma factor is associated with the core the holoenzyme is formed, which can initiate transcription. It depends on Mg(2+) as a cofactor. Requires Zn(2+) as cofactor.

It catalyses the reaction RNA(n) + a ribonucleoside 5'-triphosphate = RNA(n+1) + diphosphate. Functionally, DNA-dependent RNA polymerase catalyzes the transcription of DNA into RNA using the four ribonucleoside triphosphates as substrates. This Chlamydia trachomatis serovar L2b (strain UCH-1/proctitis) protein is DNA-directed RNA polymerase subunit beta'.